We begin with the raw amino-acid sequence, 406 residues long: RILP-like protein 1 (406 aa).

The RH1 domain occupies Gln5–Glu99. Positions Asp105–Ala319 form a coiled coil. Disordered regions lie at residues Glu234–Glu272 and Ser323–Pro351. A compositionally biased stretch (basic and acidic residues) spans Glu241–Glu257. In terms of domain architecture, RH2 spans Arg289 to Leu358. The span at Thr340–Pro351 shows a compositional bias: polar residues.

This sequence belongs to the RILPL family.

The protein resides in the cytoplasm. Its subcellular location is the cytosol. It is found in the cytoskeleton. The protein localises to the microtubule organizing center. It localises to the centrosome. The protein resides in the cell projection. Its subcellular location is the cilium. Functionally, plays a role in the regulation of cell shape and polarity. Plays a role in cellular protein transport, including protein transport away from primary cilia. Neuroprotective protein. In Danio rerio (Zebrafish), this protein is RILP-like protein 1 (rilpl1).